We begin with the raw amino-acid sequence, 48 residues long: Gas vesicle protein A (48 aa).

Belongs to the gas vesicle GvpA family. The gas vesicle shell is 2 nm thick and consists of a single layer of this protein. It forms helical ribs nearly perpendicular to the long axis of the vesicle.

The protein resides in the gas vesicle shell. In terms of biological role, gas vesicles are hollow, gas filled proteinaceous nanostructures found in some microorganisms. During planktonic growth they allow positioning of the organism at a favorable depth for light or nutrient acquisition. GvpA forms the protein shell. The sequence is that of Gas vesicle protein A from Spirulina sp. (strain CCAP 1475/10).